The following is a 1178-amino-acid chain: Zinc finger CCHC domain-containing protein 2 (1178 aa).

Disordered regions lie at residues 1–90 (MLRM…GPSA), 207–249 (AARG…RVGG), 557–683 (VTSA…SVNQ), and 936–986 (LSTA…SDST). Over residues 43-67 (PPPPPPPPAGPSRGPLPPPPPPRGL) the composition is skewed to pro residues. A compositionally biased stretch (gly residues) spans 75–88 (AAAGAGMPGGGGGP). Residues 208–219 (ARGEGSRGGAED) show a composition bias toward basic and acidic residues. The segment covering 220-229 (ERGEDGDGEQ) has biased composition (acidic residues). Position 236 is a phosphoserine (Ser236). Over residues 580–594 (PQTEKEKIKKTDNRL) the composition is skewed to basic and acidic residues. Residues 595 to 607 (NSRINGIRLSTPQ) are compositionally biased toward polar residues. Residues 632–641 (SSESYSSPSS) are compositionally biased toward low complexity. Residues 642–661 (PRHDGRESFESEEEKDRDTD) are compositionally biased toward basic and acidic residues. Residues 665–683 (EDSGNPSTTRFTGYGSVNQ) are compositionally biased toward polar residues. The segment covering 937 to 948 (STAATSPQPASA) has biased composition (low complexity). Positions 959–973 (PAVPTHTPGPAPSPS) are enriched in pro residues. Positions 974-986 (PALTHSTAQSDST) are enriched in polar residues. Residues 1131–1148 (VSCYNCGVSGHYAQDCKQ) form a CCHC-type zinc finger.

The protein is Zinc finger CCHC domain-containing protein 2 of Homo sapiens (Human).